Consider the following 871-residue polypeptide: CRISPR system Cmr subunit Cmr2 (871 aa).

The tract at residues 1–215 is not required for target RNA cleavage; the sequence is MVNIKEKLFV…THLDLTSALS (215 aa). 3 residues coordinate Mn(2+): histidine 13, aspartate 14, and histidine 25. Zn(2+) contacts are provided by cysteine 448, cysteine 451, cysteine 478, and cysteine 481. The region spanning 592-752 is the GGDEF domain; the sequence is KYYAILVMDG…GKDTLAIGLL (161 aa). Mn(2+) is bound by residues aspartate 600, glutamate 656, aspartate 673, aspartate 674, glutamate 694, and glutamate 700.

This sequence belongs to the CRISPR system Cmr2 family. As to quaternary structure, part of the type III-B Cmr ribonucleoprotein (RNP) complex, an elongated RNP with Cmr2 and Cmr3 as the base, with Cmr4 and Cmr5 forming a helical core along the mature crRNA (39 or 45 nt in length), while the complex is capped by Cmr6 and Cmr1. The 5' end of the crRNA is bound to Cmr2 and Cmr3, while Cmr6 and a Cmr1 subunit (Cmr1-1 or Cmr1-2) cap the 3' end of the crRNA. The target RNA lies antiparallel to the crRNA, with its 5' end near Cmr1 and Cmr6 and its 3' end near Cmr2 and Cmr3; major target cleavage occurs nears the junction of Cmr1/Cmr6 and Cmr4/Cmr, with minor cleavage occurring at 6 nt intervals which coincide with the proposed spacing of Cmr4 subunits. Forms a 1:1 complex with Cmr3. The Cmr2-Cmr3 complex non-specifically binds ss-target RNA and crRNA. Interacts with Cmr3, Cmr4 and Cmr5. It depends on Ca(2+) as a cofactor. Mn(2+) serves as cofactor. Zn(2+) is required as a cofactor.

The protein localises to the cytoplasm. Its function is as follows. CRISPR (clustered regularly interspaced short palindromic repeat), is an adaptive immune system that provides protection against mobile genetic elements (viruses, transposable elements and conjugative plasmids). CRISPR clusters contain sequences complementary to antecedent mobile elements and target invading nucleic acids. CRISPR clusters are transcribed and processed into CRISPR RNA (crRNA), formerly called psiRNA (prokaryotic silencing) in this organism. Part of the Cmr ribonucleoprotein complex which has divalent cation-dependent endoribonuclease activity specific for ssRNA complementary to the crRNA (target RNA), generating 5' hydroxy- and 3' phosphate or 2'-3' cyclic phosphate termini. Cmr4 is probably the subunit that cleaves target RNA. Cmr complex does not cleave ssDNA complementary to the crRNA. Cleavage of target RNA is guided by the crRNA; substrate cleavage occurs a fixed distance (14 nt) from the 3' end of the crRNA. In vitro reconstitution shows Cmr1-2 and Cmr5 are not absolutely necessary for target cleavage. The sequence is that of CRISPR system Cmr subunit Cmr2 from Pyrococcus furiosus (strain ATCC 43587 / DSM 3638 / JCM 8422 / Vc1).